A 227-amino-acid chain; its full sequence is MAYPVQLGFQDAASPIMEELLYFHDHTLMIMFLISSLVLYIISLMLTTELMHTNTMDAQEVETVWTILPAAILILIALPSLRILYMMDEITTPSLTLKTMGHQWYWSYEYTDYEDLCFDSYMTPSSDLKPGELRLLEVDNRVVLPTELAVRMLISSEDVLHSWTVPSLGVKTDAIPGRLNQATLMASRPGVYYGQCSEICGANHSFMPIVLELVPLKHFEEWLLSML.

Residues 1-14 (MAYPVQLGFQDAAS) lie on the Mitochondrial intermembrane side of the membrane. Residues 15–45 (PIMEELLYFHDHTLMIMFLISSLVLYIISLM) form a helical membrane-spanning segment. The Mitochondrial matrix portion of the chain corresponds to 46–59 (LTTELMHTNTMDAQ). A helical transmembrane segment spans residues 60 to 87 (EVETVWTILPAAILILIALPSLRILYMM). The Mitochondrial intermembrane segment spans residues 88–227 (DEITTPSLTL…HFEEWLLSML (140 aa)). His161, Cys196, Glu198, Cys200, His204, and Met207 together coordinate Cu cation. Residue Glu198 coordinates Mg(2+).

Belongs to the cytochrome c oxidase subunit 2 family. As to quaternary structure, component of the cytochrome c oxidase (complex IV, CIV), a multisubunit enzyme composed of 14 subunits. The complex is composed of a catalytic core of 3 subunits MT-CO1, MT-CO2 and MT-CO3, encoded in the mitochondrial DNA, and 11 supernumerary subunits COX4I, COX5A, COX5B, COX6A, COX6B, COX6C, COX7A, COX7B, COX7C, COX8 and NDUFA4, which are encoded in the nuclear genome. The complex exists as a monomer or a dimer and forms supercomplexes (SCs) in the inner mitochondrial membrane with NADH-ubiquinone oxidoreductase (complex I, CI) and ubiquinol-cytochrome c oxidoreductase (cytochrome b-c1 complex, complex III, CIII), resulting in different assemblies (supercomplex SCI(1)III(2)IV(1) and megacomplex MCI(2)III(2)IV(2)). Found in a complex with TMEM177, COA6, COX18, COX20, SCO1 and SCO2. Interacts with TMEM177 in a COX20-dependent manner. Interacts with COX20. Interacts with COX16. Cu cation is required as a cofactor.

Its subcellular location is the mitochondrion inner membrane. The catalysed reaction is 4 Fe(II)-[cytochrome c] + O2 + 8 H(+)(in) = 4 Fe(III)-[cytochrome c] + 2 H2O + 4 H(+)(out). In terms of biological role, component of the cytochrome c oxidase, the last enzyme in the mitochondrial electron transport chain which drives oxidative phosphorylation. The respiratory chain contains 3 multisubunit complexes succinate dehydrogenase (complex II, CII), ubiquinol-cytochrome c oxidoreductase (cytochrome b-c1 complex, complex III, CIII) and cytochrome c oxidase (complex IV, CIV), that cooperate to transfer electrons derived from NADH and succinate to molecular oxygen, creating an electrochemical gradient over the inner membrane that drives transmembrane transport and the ATP synthase. Cytochrome c oxidase is the component of the respiratory chain that catalyzes the reduction of oxygen to water. Electrons originating from reduced cytochrome c in the intermembrane space (IMS) are transferred via the dinuclear copper A center (CU(A)) of subunit 2 and heme A of subunit 1 to the active site in subunit 1, a binuclear center (BNC) formed by heme A3 and copper B (CU(B)). The BNC reduces molecular oxygen to 2 water molecules using 4 electrons from cytochrome c in the IMS and 4 protons from the mitochondrial matrix. The sequence is that of Cytochrome c oxidase subunit 2 (MT-CO2) from Lemur catta (Ring-tailed lemur).